The following is a 415-amino-acid chain: Nuclear hormone receptor family member nhr-153 (415 aa).

Residues 26–105 constitute a DNA-binding region (nuclear receptor); sequence PSVCQICRNP…AGMNPMAIQA (80 aa). NR C4-type zinc fingers lie at residues 29 to 49 and 65 to 88; these read CQICRNPAIGYHYEVPSCNGC and CFKVSNCLDGNDVIDTSKRVCRAC. Positions 170–406 constitute an NR LBD domain; that stretch reads DQRDLSTALS…DPEVLKKKCI (237 aa).

Belongs to the nuclear hormone receptor family.

Its subcellular location is the nucleus. Orphan nuclear receptor. The sequence is that of Nuclear hormone receptor family member nhr-153 (nhr-153) from Caenorhabditis elegans.